We begin with the raw amino-acid sequence, 208 residues long: Large ribosomal subunit protein uL3 (208 aa).

The disordered stretch occupies residues 117–149; that stretch reads FQGVIKRHGQSRGPMAHGSRYHRRPGSMGPVSP.

This sequence belongs to the universal ribosomal protein uL3 family. Part of the 50S ribosomal subunit. Forms a cluster with proteins L14 and L19.

In terms of biological role, one of the primary rRNA binding proteins, it binds directly near the 3'-end of the 23S rRNA, where it nucleates assembly of the 50S subunit. This is Large ribosomal subunit protein uL3 from Streptococcus equi subsp. equi (strain 4047).